Reading from the N-terminus, the 428-residue chain is Cell division protein DamX (428 aa).

The tract at residues 1-99 is disordered; it reads MDEFKPEDEL…KRKKAASKPA (99 aa). At 1-103 the chain is on the cytoplasmic side; that stretch reads MDEFKPEDEL…AASKPASRQY (103 aa). Basic and acidic residues-rich tracts occupy residues 7–36 and 50–64; these read EDELKPDPSDRRTGRSRQSSERSERTERGE and DDRRPTRAQKERNEE. A coiled-coil region spans residues 55 to 87; it reads TRAQKERNEEPEIEEEIDESEDETVDEERVERR. Residues 65–82 are compositionally biased toward acidic residues; that stretch reads PEIEEEIDESEDETVDEE. Residues 86-95 show a composition bias toward basic residues; sequence RRPRKRKKAA. A helical transmembrane segment spans residues 104-124; sequence MMMGVGILVLLLLIIGIGSAL. Residues 125 to 428 lie on the Periplasmic side of the membrane; sequence KAPSTTSSDQ…PLRQVQADLK (304 aa). Disordered stretches follow at residues 149 to 190 and 226 to 344; these read TDQA…VATD and EPAT…KSAP. Residues 236–257 are compositionally biased toward polar residues; that stretch reads GNASRDTAKTQTAERPSTTRPA. Positions 288-334 are enriched in low complexity; that stretch reads PAAPVASTKAPAATSTPAPKETATTAPVQTASPAQTTATPAAGAKTA. An SPOR domain is found at 342 to 419; that stretch reads SAPSSHYTLQ…VQAKNPWAKP (78 aa).

It belongs to the DamX family. Interacts in vitro with multiple Fts proteins, including FtsQ and FtsN.

The protein localises to the cell inner membrane. Its function is as follows. Non-essential cell division protein. The polypeptide is Cell division protein DamX (Escherichia coli (strain K12)).